Reading from the N-terminus, the 370-residue chain is Vasopressin V2 receptor (370 aa).

The disordered stretch occupies residues 1 to 28 (MLRATTSAVPRALSWPAAPGNGSEREPL). The Extracellular segment spans residues 1–37 (MLRATTSAVPRALSWPAAPGNGSEREPLDDRDPLLAR). Asn21 is a glycosylation site (N-linked (GlcNAc...) asparagine). The chain crosses the membrane as a helical span at residues 38-62 (VELALLSTVFVAVALSNGLVLGALV). The Cytoplasmic portion of the chain corresponds to 63 to 76 (RRGRRGRWAPMHVF). Residues 77 to 97 (IGHLCLADLAVALFQVLPQLA) form a helical membrane-spanning segment. The Extracellular segment spans residues 98-112 (WDATYRFRGPDALCR). A helical membrane pass occupies residues 113–134 (AVKYLQMVGMYASSYMILAMTL). At 135–158 (DRHRAICRPMLAYRHGGGARWNRP) the chain is on the cytoplasmic side. The chain crosses the membrane as a helical span at residues 159–179 (VLVAWAFSLLLSLPQLFIFAQ). Residues 180-199 (RDVGDGSGVLDCWASFAEPW) are Extracellular-facing. The helical transmembrane segment at 200 to 219 (GLRAYVTWIALMVFVAPALG) threads the bilayer. At 220–270 (IAACQVLIFREIHTSLVPGPAERAGGHRGGRRAGSPREGARVSAAMAKTAR) the chain is on the cytoplasmic side. Residues 271–292 (MTLVIVAVYVLCWAPFFLVQLW) form a helical membrane-spanning segment. At 293 to 307 (SVWDPKAPREGPPFV) the chain is on the extracellular side. Residues 308-327 (LLMLLASLNSCTNPWIYASF) traverse the membrane as a helical segment. Residues 328–370 (SSSISSELRSLLCCPRRRTPPSLRPQEESCATASSFSARDTSS) lie on the Cytoplasmic side of the membrane. Residues Cys340 and Cys341 are each lipidated (S-palmitoyl cysteine). The disordered stretch occupies residues 347–370 (PPSLRPQEESCATASSFSARDTSS). Positions 356–370 (SCATASSFSARDTSS) are enriched in polar residues.

The protein belongs to the G-protein coupled receptor 1 family. Vasopressin/oxytocin receptor subfamily. As to quaternary structure, interacts with ARRDC4. Identified in a complex containing at least ARRDC4, V2R and HGS. Interacts with TMEM147.

It localises to the cell membrane. Its function is as follows. Receptor for arginine vasopressin. The activity of this receptor is mediated by G proteins which activate adenylate cyclase. Involved in renal water reabsorption. This Sus scrofa (Pig) protein is Vasopressin V2 receptor (AVPR2).